The chain runs to 429 residues: MYIEIIDVFAREVLDSRGNPTVEVEVMLEDGSIGRAIVPSGASTGKFEALELRDGDKKRYLGKGVLKAVENVNELIAPKLLGLNAYDQVYIDNVLLELDGTENKSKLGANAILGVSMAVARAAANSLQLPLYKYLGGVNAKVLPVPLMNVINGGAHADNNLDIQEFMIVPAGAPSFREALRYGAETFHALKKILKEAGHVTAVGDEGGFAPNLKNNEEAIQVLIQAIQSAGYEPGKDIFIALDVAASEFYNEETGKYFIDGSEKTVDELIEYYKSLIEKYPIISIEDPFDQEDWEAYQKFNKEVGNKVQIVGDDLYVTNVKRLQKGIELKASNSILIKLNQIGSVTETLNAIELAKTNNMTNVISHRSGETEDTFIADLAVATNAGLIKTGSLSRSERIAKYNQLLRIEEELGDVAQYRGLDAFYSIKR.

A (2R)-2-phosphoglycerate-binding site is contributed by Q164. E206 (proton donor) is an active-site residue. Mg(2+) contacts are provided by D243, E286, and D313. (2R)-2-phosphoglycerate is bound by residues K338, R367, S368, and K389. Catalysis depends on K338, which acts as the Proton acceptor.

This sequence belongs to the enolase family. The cofactor is Mg(2+).

The protein resides in the cytoplasm. It localises to the secreted. The protein localises to the cell surface. It catalyses the reaction (2R)-2-phosphoglycerate = phosphoenolpyruvate + H2O. It functions in the pathway carbohydrate degradation; glycolysis; pyruvate from D-glyceraldehyde 3-phosphate: step 4/5. Catalyzes the reversible conversion of 2-phosphoglycerate (2-PG) into phosphoenolpyruvate (PEP). It is essential for the degradation of carbohydrates via glycolysis. This is Enolase from Thermosipho africanus (strain TCF52B).